Consider the following 531-residue polypeptide: Peptide chain release factor 3 (531 aa).

In terms of domain architecture, tr-type G spans 13 to 282 (AKRRTFAIIS…TLIKYSPPPK (270 aa)). Residues 22–29 (SHPDAGKT), 90–94 (DTPGH), and 144–147 (NKLD) contribute to the GTP site.

Belongs to the TRAFAC class translation factor GTPase superfamily. Classic translation factor GTPase family. PrfC subfamily.

Its subcellular location is the cytoplasm. In terms of biological role, increases the formation of ribosomal termination complexes and stimulates activities of RF-1 and RF-2. It binds guanine nucleotides and has strong preference for UGA stop codons. It may interact directly with the ribosome. The stimulation of RF-1 and RF-2 is significantly reduced by GTP and GDP, but not by GMP. In Psychrobacter arcticus (strain DSM 17307 / VKM B-2377 / 273-4), this protein is Peptide chain release factor 3.